The following is a 559-amino-acid chain: Amino-acid acetyltransferase, mitochondrial (559 aa).

The tract at residues 162–188 is disordered; that stretch reads RLGPKPGSEDPTSELDFTPPETHTLPP. Positions 362–538 constitute an N-acetyltransferase domain; sequence LPVQVFHSVS…GSAGLSYVED (177 aa).

The protein belongs to the acetyltransferase family.

It localises to the mitochondrion. It carries out the reaction L-glutamate + acetyl-CoA = N-acetyl-L-glutamate + CoA + H(+). Its pathway is amino-acid biosynthesis; L-arginine biosynthesis; N(2)-acetyl-L-ornithine from L-glutamate: step 1/4. Functionally, N-acetylglutamate synthase involved in arginine biosynthesis. The chain is Amino-acid acetyltransferase, mitochondrial (ARG2) from Laccaria bicolor (strain S238N-H82 / ATCC MYA-4686) (Bicoloured deceiver).